The sequence spans 209 residues: N-(5'-phosphoribosyl)anthranilate isomerase (209 aa).

This sequence belongs to the TrpF family.

The catalysed reaction is N-(5-phospho-beta-D-ribosyl)anthranilate = 1-(2-carboxyphenylamino)-1-deoxy-D-ribulose 5-phosphate. The protein operates within amino-acid biosynthesis; L-tryptophan biosynthesis; L-tryptophan from chorismate: step 3/5. This is N-(5'-phosphoribosyl)anthranilate isomerase from Pyrobaculum islandicum (strain DSM 4184 / JCM 9189 / GEO3).